Consider the following 287-residue polypeptide: Phosphatidylserine decarboxylase proenzyme (287 aa).

Active-site charge relay system; for autoendoproteolytic cleavage activity residues include Asp89, His146, and Ser252. Ser252 serves as the catalytic Schiff-base intermediate with substrate; via pyruvic acid; for decarboxylase activity. At Ser252 the chain carries Pyruvic acid (Ser); by autocatalysis.

This sequence belongs to the phosphatidylserine decarboxylase family. PSD-B subfamily. Prokaryotic type I sub-subfamily. In terms of assembly, heterodimer of a large membrane-associated beta subunit and a small pyruvoyl-containing alpha subunit. Pyruvate serves as cofactor. Is synthesized initially as an inactive proenzyme. Formation of the active enzyme involves a self-maturation process in which the active site pyruvoyl group is generated from an internal serine residue via an autocatalytic post-translational modification. Two non-identical subunits are generated from the proenzyme in this reaction, and the pyruvate is formed at the N-terminus of the alpha chain, which is derived from the carboxyl end of the proenzyme. The autoendoproteolytic cleavage occurs by a canonical serine protease mechanism, in which the side chain hydroxyl group of the serine supplies its oxygen atom to form the C-terminus of the beta chain, while the remainder of the serine residue undergoes an oxidative deamination to produce ammonia and the pyruvoyl prosthetic group on the alpha chain. During this reaction, the Ser that is part of the protease active site of the proenzyme becomes the pyruvoyl prosthetic group, which constitutes an essential element of the active site of the mature decarboxylase.

It localises to the cell membrane. It carries out the reaction a 1,2-diacyl-sn-glycero-3-phospho-L-serine + H(+) = a 1,2-diacyl-sn-glycero-3-phosphoethanolamine + CO2. Its pathway is phospholipid metabolism; phosphatidylethanolamine biosynthesis; phosphatidylethanolamine from CDP-diacylglycerol: step 2/2. Catalyzes the formation of phosphatidylethanolamine (PtdEtn) from phosphatidylserine (PtdSer). This chain is Phosphatidylserine decarboxylase proenzyme, found in Shewanella woodyi (strain ATCC 51908 / MS32).